Reading from the N-terminus, the 209-residue chain is Uracil phosphoribosyltransferase (209 aa).

Residues R79, R104, and 131–139 contribute to the 5-phospho-alpha-D-ribose 1-diphosphate site; that span reads DPMLATGGS. Uracil is bound by residues I194 and 199–201; that span reads GDA. D200 provides a ligand contact to 5-phospho-alpha-D-ribose 1-diphosphate.

Belongs to the UPRTase family. It depends on Mg(2+) as a cofactor.

It carries out the reaction UMP + diphosphate = 5-phospho-alpha-D-ribose 1-diphosphate + uracil. Its pathway is pyrimidine metabolism; UMP biosynthesis via salvage pathway; UMP from uracil: step 1/1. With respect to regulation, allosterically activated by GTP. Catalyzes the conversion of uracil and 5-phospho-alpha-D-ribose 1-diphosphate (PRPP) to UMP and diphosphate. This Levilactobacillus brevis (strain ATCC 367 / BCRC 12310 / CIP 105137 / JCM 1170 / LMG 11437 / NCIMB 947 / NCTC 947) (Lactobacillus brevis) protein is Uracil phosphoribosyltransferase.